The following is a 450-amino-acid chain: Tryptophan dimethylallyltransferase 2 (450 aa).

L-tryptophan-binding positions include 80-81 (IL) and Glu89. The substrate site is built by Arg100, Lys186, and Tyr188. The L-tryptophan site is built by Tyr190 and Arg251. Residues Arg264, Lys266, Tyr268, Gln350, Tyr352, Tyr416, and Tyr420 each contribute to the substrate site.

The protein belongs to the tryptophan dimethylallyltransferase family. As to quaternary structure, homodimer.

It catalyses the reaction L-tryptophan + dimethylallyl diphosphate = 4-(3-methylbut-2-enyl)-L-tryptophan + diphosphate. It participates in alkaloid biosynthesis; ergot alkaloid biosynthesis. Catalyzes the first step of ergot alkaloid biosynthesis. Ergot alkaloids, which are produced by endophyte fungi, can enhance plant host fitness, but also cause livestock toxicosis to host plants. The sequence is that of Tryptophan dimethylallyltransferase 2 (dmaW2) from Epichloe coenophiala (Tall fescue endophyte fungus).